The following is a 511-amino-acid chain: 2-isopropylmalate synthase (511 aa).

The 263-residue stretch at 5–267 (IQIFDTTLRD…ESQINLEETK (263 aa)) folds into the Pyruvate carboxyltransferase domain. Mn(2+)-binding residues include Asp-14, His-202, His-204, and Asn-238. Positions 391-511 (QLDNLQLQYV…EYELKEGIRT (121 aa)) are regulatory domain.

The protein belongs to the alpha-IPM synthase/homocitrate synthase family. LeuA type 1 subfamily. Homodimer. Mn(2+) serves as cofactor.

Its subcellular location is the cytoplasm. The enzyme catalyses 3-methyl-2-oxobutanoate + acetyl-CoA + H2O = (2S)-2-isopropylmalate + CoA + H(+). It functions in the pathway amino-acid biosynthesis; L-leucine biosynthesis; L-leucine from 3-methyl-2-oxobutanoate: step 1/4. Functionally, catalyzes the condensation of the acetyl group of acetyl-CoA with 3-methyl-2-oxobutanoate (2-ketoisovalerate) to form 3-carboxy-3-hydroxy-4-methylpentanoate (2-isopropylmalate). The polypeptide is 2-isopropylmalate synthase (Staphylococcus epidermidis (strain ATCC 35984 / DSM 28319 / BCRC 17069 / CCUG 31568 / BM 3577 / RP62A)).